The sequence spans 308 residues: Endonuclease G, mitochondrial (308 aa).

Residue His-148 is the Proton acceptor of the active site. Asn-180 lines the Mg(2+) pocket.

This sequence belongs to the DNA/RNA non-specific endonuclease family. As to quaternary structure, homodimer; disulfide-linked. Interacts with crn-5, crn-4, crn-1 and cyn-13. The cofactor is Mg(2+).

Its subcellular location is the mitochondrion. In terms of biological role, endonuclease important for programmed cell death; it mediates apoptotic DNA fragmentation. In Caenorhabditis elegans, this protein is Endonuclease G, mitochondrial (cps-6).